The sequence spans 270 residues: Type III pantothenate kinase (270 aa).

16 to 23 (EIGNTTAM) lines the ATP pocket. Residues tyrosine 106 and 113–116 (GADR) contribute to the substrate site. The Proton acceptor role is filled by aspartate 115. Aspartate 136 provides a ligand contact to K(+). Position 139 (threonine 139) interacts with ATP. Threonine 191 is a substrate binding site.

The protein belongs to the type III pantothenate kinase family. Homodimer. The cofactor is NH4(+). It depends on K(+) as a cofactor.

The protein resides in the cytoplasm. It catalyses the reaction (R)-pantothenate + ATP = (R)-4'-phosphopantothenate + ADP + H(+). It participates in cofactor biosynthesis; coenzyme A biosynthesis; CoA from (R)-pantothenate: step 1/5. Its function is as follows. Catalyzes the phosphorylation of pantothenate (Pan), the first step in CoA biosynthesis. This is Type III pantothenate kinase from Chlorobium luteolum (strain DSM 273 / BCRC 81028 / 2530) (Pelodictyon luteolum).